We begin with the raw amino-acid sequence, 145 residues long: 3-hydroxyacyl-[acyl-carrier-protein] dehydratase FabZ (145 aa).

Residue His47 is part of the active site.

Belongs to the thioester dehydratase family. FabZ subfamily.

The protein localises to the cytoplasm. The catalysed reaction is a (3R)-hydroxyacyl-[ACP] = a (2E)-enoyl-[ACP] + H2O. Functionally, involved in unsaturated fatty acids biosynthesis. Catalyzes the dehydration of short chain beta-hydroxyacyl-ACPs and long chain saturated and unsaturated beta-hydroxyacyl-ACPs. This chain is 3-hydroxyacyl-[acyl-carrier-protein] dehydratase FabZ, found in Vesicomyosocius okutanii subsp. Calyptogena okutanii (strain HA).